The chain runs to 462 residues: Glycine--tRNA ligase (462 aa).

2 residues coordinate substrate: Arg-98 and Glu-174. ATP contacts are provided by residues 206–208 (RNE), 216–221 (FRTREF), 290–291 (EL), and 334–337 (GADR). A substrate-binding site is contributed by 221–225 (FEQME). Residue 330 to 334 (EPSLG) participates in substrate binding.

This sequence belongs to the class-II aminoacyl-tRNA synthetase family. As to quaternary structure, homodimer.

The protein localises to the cytoplasm. The enzyme catalyses tRNA(Gly) + glycine + ATP = glycyl-tRNA(Gly) + AMP + diphosphate. Its function is as follows. Catalyzes the attachment of glycine to tRNA(Gly). The chain is Glycine--tRNA ligase from Lachnoclostridium phytofermentans (strain ATCC 700394 / DSM 18823 / ISDg) (Clostridium phytofermentans).